The chain runs to 179 residues: Probable chemoreceptor glutamine deamidase CheD 2 (179 aa).

It belongs to the CheD family.

The catalysed reaction is L-glutaminyl-[protein] + H2O = L-glutamyl-[protein] + NH4(+). In terms of biological role, probably deamidates glutamine residues to glutamate on methyl-accepting chemotaxis receptors (MCPs), playing an important role in chemotaxis. This Ruegeria sp. (strain TM1040) (Silicibacter sp.) protein is Probable chemoreceptor glutamine deamidase CheD 2.